Here is a 2335-residue protein sequence, read N- to C-terminus: Serine/threonine-protein kinase tor1 (2335 aa).

HEAT repeat units follow at residues 1-31 (MEYF…SSTK), 164-201 (LYIS…VVCQ), 331-371 (PYLQ…AVKL), 410-449 (PIQE…AREP), 474-512 (YSLI…RDPI), 522-560 (ESVA…RHLA), 562-596 (PDNI…YNPA), 642-679 (PYIQ…VEGE), 684-722 (DVRG…RSGY), 728-766 (LDYP…LDPY), 843-880 (VFLP…IIGP), 904-923 (LLVI…DEFK), 924-961 (FYLP…FGSN), 964-1003 (EYMH…SVNF), and 1005-1042 (DHAS…QLGY). Positions 1226-1781 (VISAHASKCN…VYSLTVSSKS (556 aa)) constitute an FAT domain. In terms of domain architecture, PI3K/PI4K catalytic spans 1955–2269 (FHHTFEVISS…ARHADYAALS (315 aa)). Positions 1961-1967 (VISSKQR) are G-loop. Residue threonine 1972 is modified to Phosphothreonine; by PKB/AKT1. The interval 2134 to 2142 (GLGDRHPSN) is catalytic loop. The segment at 2154 to 2179 (HIDFGDCFEVAMHREKFPEKIPFRLT) is activation loop. The 33-residue stretch at 2303-2335 (EQLPVKAQVEKLIQQATAPENLCRCYVGWCSFW) folds into the FATC domain.

Belongs to the PI3/PI4-kinase family. The target of rapamycin complex 2 (TORC2) is composed of at least bit61, pop3/wat1, sin1, ste20 and tor1. Phosphorylation at Thr-1972 in the ATP-binding region by AKT1 strongly reduces kinase activity.

The protein localises to the cytoplasm. It carries out the reaction L-seryl-[protein] + ATP = O-phospho-L-seryl-[protein] + ADP + H(+). The catalysed reaction is L-threonyl-[protein] + ATP = O-phospho-L-threonyl-[protein] + ADP + H(+). In terms of biological role, catalytic component of TORC2, which regulates multiple cellular processes to control cell growth in response to environmental signals. In response to signals, TORC2 phosphorylates AGC protein kinase family members. TORC2 is required for cell survival under various stress conditions. TORC2 positively controls G1 cell-cycle arrest, sexual development and amino acid uptake. Positively regulates amino acid uptake through the control of expression of amino acid permeases. Responsible for the phosphorylation of AGC kinase gad8 at 'Ser-527' and 'Ser-546', activating gad8 kinase activity and promoting sexual development. The protein is Serine/threonine-protein kinase tor1 of Schizosaccharomyces pombe (strain 972 / ATCC 24843) (Fission yeast).